A 205-amino-acid chain; its full sequence is Macrophage immunometabolism regulator (205 aa).

Positions 1 to 40 (MEVDINGVNRTNNSVPSTTEGSSPSKPDPEKPRCSSTPCS) are disordered. Residues 8–25 (VNRTNNSVPSTTEGSSPS) are compositionally biased toward polar residues.

Belongs to the UNC119-binding protein family. In terms of assembly, interacts with unc119 family proteins; interaction preferentially takes place when unc119 proteins are unliganded with myristoylated proteins.

It is found in the cytoplasm. It localises to the cell projection. Its subcellular location is the cilium. Functionally, may play a role in immune regulation through regulation of the macrophage function. May also play a role in trafficking of proteins via its interaction with unc119 family cargo adapters. May play a role in ciliary membrane localization. The protein is Macrophage immunometabolism regulator (macir) of Xenopus tropicalis (Western clawed frog).